The primary structure comprises 369 residues: 3-dehydroquinate synthase (369 aa).

NAD(+)-binding positions include 75 to 80 (DGEEHK), 109 to 113 (GVIGD), 133 to 134 (TT), K146, K155, and 173 to 176 (TLKT). Zn(2+) contacts are provided by E188, H251, and H268.

It belongs to the sugar phosphate cyclases superfamily. Dehydroquinate synthase family. Requires Co(2+) as cofactor. Zn(2+) serves as cofactor. It depends on NAD(+) as a cofactor.

Its subcellular location is the cytoplasm. It catalyses the reaction 7-phospho-2-dehydro-3-deoxy-D-arabino-heptonate = 3-dehydroquinate + phosphate. Its pathway is metabolic intermediate biosynthesis; chorismate biosynthesis; chorismate from D-erythrose 4-phosphate and phosphoenolpyruvate: step 2/7. Its function is as follows. Catalyzes the conversion of 3-deoxy-D-arabino-heptulosonate 7-phosphate (DAHP) to dehydroquinate (DHQ). The chain is 3-dehydroquinate synthase from Legionella pneumophila (strain Paris).